Consider the following 467-residue polypeptide: Probable rhamnogalacturonase A (467 aa).

Residues 1-19 (MHSLSLISLALLSPLLVNA) form the signal peptide. C40 and C66 are oxidised to a cystine. D217 (proton donor) is an active-site residue. Residues C219 and C236 are joined by a disulfide bond. N-linked (GlcNAc...) asparagine glycans are attached at residues N237 and N252. Residue H292 is part of the active site. N319 is a glycosylation site (N-linked (GlcNAc...) asparagine). Cystine bridges form between C342/C348 and C370/C379.

It belongs to the glycosyl hydrolase 28 family.

The protein localises to the secreted. The catalysed reaction is Endohydrolysis of alpha-D-GalA-(1-&gt;2)-alpha-L-Rha glycosidic bond in the rhamnogalacturonan I backbone with initial inversion of anomeric configuration releasing oligosaccharides with beta-D-GalA at the reducing end.. In terms of biological role, pectinolytic enzymes consist of four classes of enzymes: pectine lyase, polygalacturonase, pectin methylesterase and rhamnogalacturonase. Hydrolyzes alpha-D-galacturonopyranosyl-(1,2)-alpha-L-rhamnopyranosyl linkages in the backbone of the hairy regions of pectins. The polypeptide is Probable rhamnogalacturonase A (rhgA) (Aspergillus oryzae (strain ATCC 42149 / RIB 40) (Yellow koji mold)).